Consider the following 424-residue polypeptide: UDP-N-acetylglucosamine 1-carboxyvinyltransferase (424 aa).

A phosphoenolpyruvate-binding site is contributed by 22-23 (KN). Arg98 serves as a coordination point for UDP-N-acetyl-alpha-D-glucosamine. Residue Cys122 is the Proton donor of the active site. Residue Cys122 is modified to 2-(S-cysteinyl)pyruvic acid O-phosphothioketal. Residues 127-131 (RPVDQ), Asp312, and Ile334 contribute to the UDP-N-acetyl-alpha-D-glucosamine site.

The protein belongs to the EPSP synthase family. MurA subfamily.

It is found in the cytoplasm. The enzyme catalyses phosphoenolpyruvate + UDP-N-acetyl-alpha-D-glucosamine = UDP-N-acetyl-3-O-(1-carboxyvinyl)-alpha-D-glucosamine + phosphate. It participates in cell wall biogenesis; peptidoglycan biosynthesis. In terms of biological role, cell wall formation. Adds enolpyruvyl to UDP-N-acetylglucosamine. This chain is UDP-N-acetylglucosamine 1-carboxyvinyltransferase, found in Xanthomonas campestris pv. campestris (strain B100).